The chain runs to 488 residues: MSFNHKTIEELHDLLVAKEISATELTQKTLEDIKSREEAVGSFITVSEEAALKQAAAIDAKGIDADNLMSGIPLAVKDNISTKGILTTAASKMLYNYEPIFDATSVANAYAKDMIVIGKTNMDEFAMGGSTETSYFKKTKNAWDHTKVPGGSSGGSATAVASGQVRLSLGSDTGGSIRQPAAFNGVVGLKPTYGTVSRYGLIAFGSSLDQIGPFAPTVKENAQLLNVIASSDVKDATSAPVRIADYTSKIGRDIKGMKIALPKEYLGEGIDPEIKETVLAAAKQFEALGATVEEVSLPHSKYGVAVYYIIASSEASSNLQRFDGIRYGFRADDAKNLDEIYVNTRSQGFGDEVKRRIMLGTFSLSSGYYDAYFKKAGQVRTLIIEDFDKVFADYDLILGPTTPTVAFGLDTLNHDPVAMYLADLLTIPVNLAGLPGISIPAGFVDGLPVGLQLIGPKYAEETIYQAAAAFEAVTDYHKQQPIIFGGDK.

Catalysis depends on charge relay system residues Lys-77 and Ser-152. The Acyl-ester intermediate role is filled by Ser-176.

It belongs to the amidase family. GatA subfamily. As to quaternary structure, heterotrimer of A, B and C subunits.

The enzyme catalyses L-glutamyl-tRNA(Gln) + L-glutamine + ATP + H2O = L-glutaminyl-tRNA(Gln) + L-glutamate + ADP + phosphate + H(+). Allows the formation of correctly charged Gln-tRNA(Gln) through the transamidation of misacylated Glu-tRNA(Gln) in organisms which lack glutaminyl-tRNA synthetase. The reaction takes place in the presence of glutamine and ATP through an activated gamma-phospho-Glu-tRNA(Gln). The chain is Glutamyl-tRNA(Gln) amidotransferase subunit A from Streptococcus pyogenes serotype M28 (strain MGAS6180).